Here is a 25-residue protein sequence, read N- to C-terminus: Xenoposin precursor fragment BM1 (25 aa).

As to expression, expressed by the skin glands.

It localises to the secreted. Functionally, antimicrobial peptide. The polypeptide is Xenoposin precursor fragment BM1 (Xenopus boumbaensis (Mawa clawed frog)).